The chain runs to 258 residues: Small ribosomal subunit protein mS40 (258 aa).

Residues 1–35 (MAASVLNTVLRRLPMLSLFRGSHRVQVPLQTLCTK) constitute a mitochondrion transit peptide. Residues Ser38 and Ser49 each carry the phosphoserine modification. The segment at 214 to 258 (SRLRRLYQGHLQEESGPPPESMPKMPPRTPAEASSTGQTGPQSAL) is disordered. A compositionally biased stretch (pro residues) spans 229 to 242 (GPPPESMPKMPPRT). Residues 245–258 (EASSTGQTGPQSAL) are compositionally biased toward polar residues.

It belongs to the bacterial ribosomal protein bS18 family. Mitochondrion-specific ribosomal protein mS40 subfamily. Component of the mitochondrial small ribosomal subunit (mt-SSU). Mature mammalian 55S mitochondrial ribosomes consist of a small (28S) and a large (39S) subunit. The 28S small subunit contains a 12S ribosomal RNA (12S mt-rRNA) and 30 different proteins. The 39S large subunit contains a 16S rRNA (16S mt-rRNA), a copy of mitochondrial valine transfer RNA (mt-tRNA(Val)), which plays an integral structural role, and 52 different proteins. mS40 has a zinc binding site.

It is found in the mitochondrion. This Homo sapiens (Human) protein is Small ribosomal subunit protein mS40 (MRPS18B).